The chain runs to 335 residues: Phosphatidylglycerol--prolipoprotein diacylglyceryl transferase (335 aa).

The next 3 helical transmembrane spans lie at 31–51, 67–87, and 100–120; these read IYWYGIIFVCGFLLAILTYSL, YIFLAIPMTIIGARLWSLAIG, and LAIQGGVIAGVLSAAIYFPLI. A 1,2-diacyl-sn-glycero-3-phospho-(1'-sn-glycerol) is bound at residue arginine 163. 3 consecutive transmembrane segments (helical) span residues 213-233, 235-255, and 277-297; these read PLFLYESFFNVIVFVFIYFGL, YIKQLKIGFVSMSYFFFYGVI, and SLLLIFGVLGALYVQFIAPIL.

The protein belongs to the Lgt family.

Its subcellular location is the cell membrane. It catalyses the reaction L-cysteinyl-[prolipoprotein] + a 1,2-diacyl-sn-glycero-3-phospho-(1'-sn-glycerol) = an S-1,2-diacyl-sn-glyceryl-L-cysteinyl-[prolipoprotein] + sn-glycerol 1-phosphate + H(+). The protein operates within protein modification; lipoprotein biosynthesis (diacylglyceryl transfer). Its function is as follows. Catalyzes the transfer of the diacylglyceryl group from phosphatidylglycerol to the sulfhydryl group of the N-terminal cysteine of a prolipoprotein, the first step in the formation of mature lipoproteins. The chain is Phosphatidylglycerol--prolipoprotein diacylglyceryl transferase from Ureaplasma urealyticum serovar 10 (strain ATCC 33699 / Western).